A 226-amino-acid chain; its full sequence is Putative uroporphyrinogen-III synthase (226 aa).

The protein belongs to the uroporphyrinogen-III synthase family.

It catalyses the reaction hydroxymethylbilane = uroporphyrinogen III + H2O. It participates in porphyrin-containing compound metabolism; protoporphyrin-IX biosynthesis; coproporphyrinogen-III from 5-aminolevulinate: step 3/4. Functionally, catalyzes cyclization of the linear tetrapyrrole, hydroxymethylbilane, to the macrocyclic uroporphyrinogen III. In Archaeoglobus fulgidus (strain ATCC 49558 / DSM 4304 / JCM 9628 / NBRC 100126 / VC-16), this protein is Putative uroporphyrinogen-III synthase.